The chain runs to 274 residues: Thiamine kinase (274 aa).

Belongs to the thiamine kinase family.

The enzyme catalyses thiamine + ATP = thiamine phosphate + ADP + H(+). It participates in cofactor biosynthesis; thiamine diphosphate biosynthesis; thiamine phosphate from thiamine: step 1/1. In terms of biological role, catalyzes the ATP-dependent phosphorylation of thiamine to thiamine phosphate. Is involved in thiamine salvage. The polypeptide is Thiamine kinase (Escherichia coli O6:K15:H31 (strain 536 / UPEC)).